Reading from the N-terminus, the 120-residue chain is NAD(P)H-quinone oxidoreductase subunit 3, chloroplastic (120 aa).

3 helical membrane-spanning segments follow: residues 9–29 (IFWAFLLISSVIPILAFLLSG), 64–84 (MFALVFVVFDVETVFLYPWAM), and 88–108 (VLGVSVFIEALIFVLILIVGL).

It belongs to the complex I subunit 3 family. As to quaternary structure, NDH is composed of at least 16 different subunits, 5 of which are encoded in the nucleus.

It is found in the plastid. The protein localises to the chloroplast thylakoid membrane. The enzyme catalyses a plastoquinone + NADH + (n+1) H(+)(in) = a plastoquinol + NAD(+) + n H(+)(out). The catalysed reaction is a plastoquinone + NADPH + (n+1) H(+)(in) = a plastoquinol + NADP(+) + n H(+)(out). NDH shuttles electrons from NAD(P)H:plastoquinone, via FMN and iron-sulfur (Fe-S) centers, to quinones in the photosynthetic chain and possibly in a chloroplast respiratory chain. The immediate electron acceptor for the enzyme in this species is believed to be plastoquinone. Couples the redox reaction to proton translocation, and thus conserves the redox energy in a proton gradient. This chain is NAD(P)H-quinone oxidoreductase subunit 3, chloroplastic, found in Fagopyrum esculentum subsp. ancestrale (Wild buckwheat).